A 416-amino-acid chain; its full sequence is Glutamyl-tRNA reductase (416 aa).

Residues 49-52 (TCNR), S105, 110-112 (EPQ), and Q116 each bind substrate. C50 serves as the catalytic Nucleophile. 185–190 (GAGETI) contributes to the NADP(+) binding site.

It belongs to the glutamyl-tRNA reductase family. As to quaternary structure, homodimer.

It catalyses the reaction (S)-4-amino-5-oxopentanoate + tRNA(Glu) + NADP(+) = L-glutamyl-tRNA(Glu) + NADPH + H(+). Its pathway is porphyrin-containing compound metabolism; protoporphyrin-IX biosynthesis; 5-aminolevulinate from L-glutamyl-tRNA(Glu): step 1/2. In terms of biological role, catalyzes the NADPH-dependent reduction of glutamyl-tRNA(Glu) to glutamate 1-semialdehyde (GSA). The protein is Glutamyl-tRNA reductase of Shewanella piezotolerans (strain WP3 / JCM 13877).